A 261-amino-acid polypeptide reads, in one-letter code: Probable RNA-binding protein ARP1 (261 aa).

The RRM domain maps to 17–94 (TKVFVGGLAW…RRANCNLASL (78 aa)). Residues 96 to 122 (GRLRKSPTMTSPQQGPKNGNRATPPHV) are disordered. Polar residues predominate over residues 102-116 (PTMTSPQQGPKNGNR).

As to expression, expressed in vasculature of leaves, roots and siliques.

The protein resides in the nucleus. Functionally, probable RNA-binding protein involved in the regulation of abscisic acid (ABA) response during seed germination. May regulate transcript levels of several germination-responsive genes under ABA. The sequence is that of Probable RNA-binding protein ARP1 from Arabidopsis thaliana (Mouse-ear cress).